The primary structure comprises 147 residues: Ubiquitin-conjugating enzyme E2 2 (147 aa).

The region spanning 1 to 147 is the UBC core domain; sequence MALKRIQKEL…AREWTQKYAM (147 aa). The Glycyl thioester intermediate role is filled by cysteine 85.

The protein belongs to the ubiquitin-conjugating enzyme family. As to quaternary structure, interacts with the brc-1-brd-1 heterodimer following ionizing irradiation. As to expression, expressed in the nervous system.

The protein resides in the nucleus. Its subcellular location is the chromosome. The protein localises to the cytoplasm. The catalysed reaction is S-ubiquitinyl-[E1 ubiquitin-activating enzyme]-L-cysteine + [E2 ubiquitin-conjugating enzyme]-L-cysteine = [E1 ubiquitin-activating enzyme]-L-cysteine + S-ubiquitinyl-[E2 ubiquitin-conjugating enzyme]-L-cysteine.. Its pathway is protein modification; protein ubiquitination. Catalyzes the covalent attachment of ubiquitin to other proteins. Mediates the selective degradation of short-lived and abnormal proteins. Plays a role in the DNA damage response. In particular, in response to ionizing radiation, associates with the E3 ubiquitin-protein ligase brc-1-brd-1 heterodimer on chromatin to activate E3-ubiquitin ligase activity of the heterodimer, and thus its DNA damage repair mechanisms. Required, cell autonomously, for death of the linker cell, a male-specific cell which guides the elongation of the gonad; perhaps acting as part of the ubiquitin proteasome system (UPS) and modulated by heat shock transcription factor hsf-1. In Caenorhabditis elegans, this protein is Ubiquitin-conjugating enzyme E2 2.